The sequence spans 357 residues: DNA replication and repair protein RecF (357 aa).

Position 30 to 37 (30 to 37 (GANGSGKT)) interacts with ATP.

Belongs to the RecF family.

Its subcellular location is the cytoplasm. Functionally, the RecF protein is involved in DNA metabolism; it is required for DNA replication and normal SOS inducibility. RecF binds preferentially to single-stranded, linear DNA. It also seems to bind ATP. This Salmonella paratyphi A (strain ATCC 9150 / SARB42) protein is DNA replication and repair protein RecF.